We begin with the raw amino-acid sequence, 865 residues long: Catenin alpha-2 (865 aa).

Basic and acidic residues predominate over residues 823 to 839; that stretch reads PEKKPLVKREKPEECQT. Residues 823 to 851 are disordered; it reads PEKKPLVKREKPEECQTRVRRGSQKKHIS. A compositionally biased stretch (basic residues) spans 840–850; sequence RVRRGSQKKHI.

The protein belongs to the vinculin/alpha-catenin family.

The protein localises to the cell membrane. The protein resides in the cytoplasm. It localises to the cytoskeleton. It is found in the cell junction. Its subcellular location is the adherens junction. The protein localises to the cell projection. The protein resides in the axon. It localises to the nucleus. Functionally, may function as a linker between cadherin adhesion receptors and the cytoskeleton to regulate cell-cell adhesion and differentiation in the nervous system. This Danio rerio (Zebrafish) protein is Catenin alpha-2 (Ctnna2).